Here is a 404-residue protein sequence, read N- to C-terminus: Probable tRNA sulfurtransferase (404 aa).

A THUMP domain is found at 60–165; that stretch reads EPVAEALKNV…DEAAYISHEE (106 aa). ATP is bound by residues 183-184, 208-209, Arg265, Gly287, and Gln296; these read ML and HF.

It belongs to the ThiI family.

Its subcellular location is the cytoplasm. It carries out the reaction [ThiI sulfur-carrier protein]-S-sulfanyl-L-cysteine + a uridine in tRNA + 2 reduced [2Fe-2S]-[ferredoxin] + ATP + H(+) = [ThiI sulfur-carrier protein]-L-cysteine + a 4-thiouridine in tRNA + 2 oxidized [2Fe-2S]-[ferredoxin] + AMP + diphosphate. The catalysed reaction is [ThiS sulfur-carrier protein]-C-terminal Gly-Gly-AMP + S-sulfanyl-L-cysteinyl-[cysteine desulfurase] + AH2 = [ThiS sulfur-carrier protein]-C-terminal-Gly-aminoethanethioate + L-cysteinyl-[cysteine desulfurase] + A + AMP + 2 H(+). It functions in the pathway cofactor biosynthesis; thiamine diphosphate biosynthesis. In terms of biological role, catalyzes the ATP-dependent transfer of a sulfur to tRNA to produce 4-thiouridine in position 8 of tRNAs, which functions as a near-UV photosensor. Also catalyzes the transfer of sulfur to the sulfur carrier protein ThiS, forming ThiS-thiocarboxylate. This is a step in the synthesis of thiazole, in the thiamine biosynthesis pathway. The sulfur is donated as persulfide by IscS. The protein is Probable tRNA sulfurtransferase of Streptococcus uberis (strain ATCC BAA-854 / 0140J).